The sequence spans 191 residues: Peptidyl-tRNA hydrolase (191 aa).

Tyrosine 16 is a tRNA binding site. Histidine 21 serves as the catalytic Proton acceptor. Residues phenylalanine 66, asparagine 68, and asparagine 114 each coordinate tRNA.

It belongs to the PTH family. As to quaternary structure, monomer.

It is found in the cytoplasm. The catalysed reaction is an N-acyl-L-alpha-aminoacyl-tRNA + H2O = an N-acyl-L-amino acid + a tRNA + H(+). Hydrolyzes ribosome-free peptidyl-tRNAs (with 1 or more amino acids incorporated), which drop off the ribosome during protein synthesis, or as a result of ribosome stalling. Functionally, catalyzes the release of premature peptidyl moieties from peptidyl-tRNA molecules trapped in stalled 50S ribosomal subunits, and thus maintains levels of free tRNAs and 50S ribosomes. This is Peptidyl-tRNA hydrolase from Geotalea daltonii (strain DSM 22248 / JCM 15807 / FRC-32) (Geobacter daltonii).